The sequence spans 1337 residues: Rho GTPase-activating protein 29 (1337 aa).

Positions 1–13 (MFRQGSNSGNKRM) are enriched in polar residues. Disordered regions lie at residues 1–20 (MFRQGSNSGNKRMTSGARLS), 369–397 (REEYEKARSSTSRTEEEQPAAGGRTLEKK), 513–551 (SSKTGMSLHKRSQNSTRSSHGNLSQGSATSMDNHSADEV), and 564–654 (ERRS…TGLS). The F-BAR domain maps to 225–488 (EQVDLLLLKN…QAKKYEPGQR (264 aa)). A coiled-coil region spans residues 326–443 (LLARKNDLDK…SEILAQIRKL (118 aa)). Residues 369-384 (REEYEKARSSTSRTEE) show a composition bias toward basic and acidic residues. 2 stretches are compositionally biased toward polar residues: residues 525–545 (QNSTRSSHGNLSQGSATSMDN) and 568–579 (NSSIDMQVPRTQ). Low complexity predominate over residues 596-613 (CSDSESAGGSSESRSMDS). The Phorbol-ester/DAG-type zinc finger occupies 676–723 (AHTHKLRKLRAPSKCRECDSLVVFHGAECEECSLACHKKCLETLAIQC). The 214-residue stretch at 737–950 (IDFAQVVKNS…LLIKHHQMIF (214 aa)) folds into the Rho-GAP domain. Positions 960-973 (TSPTVSQASFGSSI) are enriched in polar residues. 5 disordered regions span residues 960–983 (TSPTVSQASFGSSIQDKESKLSRH), 1016–1066 (MKTG…AKPV), 1083–1114 (SRNTVEHDHSPAAIEETTEPEKPTTPRHTNFY), 1149–1210 (PPSG…KPSD), and 1273–1337 (TVSR…AHFV). Positions 974–983 (QDKESKLSRH) are enriched in basic and acidic residues. Residues 1083-1092 (SRNTVEHDHS) are compositionally biased toward basic and acidic residues. Polar residues-rich tracts occupy residues 1161–1177 (MASQSSTSRKDGTSQSG) and 1295–1310 (VTLSPPQSPGSSTEEL). Residues 1325–1337 (RMQELEHREAHFV) are compositionally biased toward basic and acidic residues.

Functionally, GTPase activator for the Rho-type GTPases by converting them to an inactive GDP-bound state. Has strong activity toward RHOA, and weaker activity toward RAC1 and CDC42. This is Rho GTPase-activating protein 29 (arhgap29) from Danio rerio (Zebrafish).